A 482-amino-acid polypeptide reads, in one-letter code: Cysteine--tRNA ligase (482 aa).

Cys29 provides a ligand contact to Zn(2+). The 'HIGH' region motif lies at 31-41; the sequence is PTVYDSAHVGH. Cys210, His235, and Glu239 together coordinate Zn(2+). Residues 272 to 276 carry the 'KMSKS' region motif; it reads KMSKS. Lys275 is an ATP binding site.

The protein belongs to the class-I aminoacyl-tRNA synthetase family. As to quaternary structure, monomer. Zn(2+) is required as a cofactor.

It localises to the cytoplasm. The enzyme catalyses tRNA(Cys) + L-cysteine + ATP = L-cysteinyl-tRNA(Cys) + AMP + diphosphate. This is Cysteine--tRNA ligase from Anaeromyxobacter sp. (strain Fw109-5).